A 90-amino-acid chain; its full sequence is Phosphoribosyl-ATP pyrophosphatase (90 aa).

This sequence belongs to the PRA-PH family.

The protein resides in the cytoplasm. It carries out the reaction 1-(5-phospho-beta-D-ribosyl)-ATP + H2O = 1-(5-phospho-beta-D-ribosyl)-5'-AMP + diphosphate + H(+). It participates in amino-acid biosynthesis; L-histidine biosynthesis; L-histidine from 5-phospho-alpha-D-ribose 1-diphosphate: step 2/9. The polypeptide is Phosphoribosyl-ATP pyrophosphatase (Streptomyces griseus subsp. griseus (strain JCM 4626 / CBS 651.72 / NBRC 13350 / KCC S-0626 / ISP 5235)).